A 681-amino-acid chain; its full sequence is SRSF protein kinase 2 (681 aa).

Residues 1-63 (MSVNSEKSSS…EQEDPADYCK (63 aa)) form a disordered region. Residues 22–41 (LVPPPPPPPPPPPLPDPAPP) are compositionally biased toward pro residues. The segment covering 42 to 59 (EPEEEILGSDDEEQEDPA) has biased composition (acidic residues). Position 50 is a phosphoserine (Ser-50). A Protein kinase domain is found at 79–681 (YHVIRKLGWG…ECLRHPWLNS (603 aa)). Residues 85–93 (LGWGHFSTV) and Lys-108 each bind ATP. Asp-212 acts as the Proton acceptor in catalysis. 3 disordered regions span residues 237–270 (WQKA…KKKL), 302–452 (ENIT…PLFS), and 467–499 (GSPL…KTKT). Phosphothreonine occurs at positions 331 and 332. Ser-378 bears the Phosphoserine mark. A compositionally biased stretch (acidic residues) spans 395-419 (QLEDEEDDEDDCANPEEYNLDEPNA). Over residues 421–431 (SDYTYSSSYEQ) the composition is skewed to polar residues. At Ser-468 the chain carries Phosphoserine. Thr-471 carries the post-translational modification Phosphothreonine. Phosphoserine is present on residues Ser-477, Ser-479, and Ser-483. A Phosphothreonine; by PKB/AKT1 modification is found at Thr-485. 2 positions are modified to phosphoserine: Ser-487 and Ser-490. Ser-581 is modified (phosphoserine; by CK2).

This sequence belongs to the protein kinase superfamily. CMGC Ser/Thr protein kinase family. As to quaternary structure, associates with U4/U6-U5 tri-small nuclear ribonucleoproteins (U4/U6-U5 tri-snRNPs). Interacts with PKB/AKT1 in a phosphorylation-dependent manner. The phosphorylated form (by PKB/AKT1) interacts with YWHAB and YWHAE. Interaction with YWHAB suppresses its cleavage by caspases and inhibits the release of its N-terminal pro-apoptotic fragment. Interacts with SFN. Interacts with ACIN1. Interacts with POLR2A/RNA polymerase II; the interaction occurs during the co-transcriptional formation of inappropriate R-loops. It depends on Mg(2+) as a cofactor. Phosphorylation at Thr-485 by PKB/AKT1 enhances its stimulatory activity in triggering cyclin-D1 (CCND1) expression and promoting apoptosis in neurons, which can be blocked by YWHAB. It also enhances its protein kinase activity toward ACIN1 and SRSF2, promotes its nuclear translocation and prevents its proteolytic cleavage. In terms of processing, proteolytically cleaved at Asp-137 and Asp-401 by caspase-3 during apoptotic cell death. Cleavage at Asp-137 which is the major site of cleavage, produces a small N-terminal fragment that translocates into nucleus and promotes VP16-induced apoptosis. In terms of tissue distribution, expressed in testes, lung and brain.

The protein localises to the cytoplasm. It is found in the nucleus. Its subcellular location is the nucleoplasm. The protein resides in the nucleus speckle. It localises to the chromosome. The catalysed reaction is L-seryl-[protein] + ATP = O-phospho-L-seryl-[protein] + ADP + H(+). The enzyme catalyses L-threonyl-[protein] + ATP = O-phospho-L-threonyl-[protein] + ADP + H(+). Activated by phosphorylation on Ser-50 and Ser-581. In terms of biological role, serine/arginine-rich protein-specific kinase which specifically phosphorylates its substrates at serine residues located in regions rich in arginine/serine dipeptides, known as RS domains and is involved in the phosphorylation of SR splicing factors and the regulation of splicing. Promotes neuronal apoptosis by up-regulating cyclin-D1 (CCND1) expression. This is done by the phosphorylation of SRSF2, leading to the suppression of p53/TP53 phosphorylation thereby relieving the repressive effect of p53/TP53 on cyclin-D1 (CCND1) expression. Phosphorylates ACIN1, and redistributes it from the nuclear speckles to the nucleoplasm, resulting in cyclin A1 but not cyclin A2 up-regulation. Plays an essential role in spliceosomal B complex formation via the phosphorylation of DDX23/PRP28. Probably by phosphorylating DDX23, leads to the suppression of incorrect R-loops formed during transcription; R-loops are composed of a DNA:RNA hybrid and the associated non-template single-stranded DNA. This is SRSF protein kinase 2 from Mus musculus (Mouse).